We begin with the raw amino-acid sequence, 1102 residues long: Putative helicase/primase complex protein (1102 aa).

Disordered regions lie at residues 1031-1057 (TKEEISSTKEETYSTKEETYSTKEETC) and 1082-1102 (EETCSIKEETSSIKEETFTET).

It belongs to the asfivirus F1055L family.

Functionally, may be involved in DNA replication. In African swine fever virus (isolate Tick/Malawi/Lil 20-1/1983) (ASFV), this protein is Putative helicase/primase complex protein.